Reading from the N-terminus, the 502-residue chain is Hexokinase-2 (502 aa).

Residues 4 to 24 traverse the membrane as a helical segment; sequence VAVATTVVCSVAVCAAAALIV. The Hexokinase domain occupies 35-487; that stretch reads ARVIEILKAF…SGVGAALLAA (453 aa). Positions 90-228 are hexokinase small subdomain; sequence SGDETGFFYA…GLDMLVAALV (139 aa). ADP-binding residues include G104, T105, and N106. Positions 194, 195, 229, and 230 each coordinate D-glucose. Positions 229–476 are hexokinase large subdomain; the sequence is NDTIGTLAGG…ESVEVILSND (248 aa). T253 contributes to the ADP binding site. Residues N256, E284, and E315 each coordinate D-glucose. G441 is a binding site for ADP.

The protein belongs to the hexokinase family. In terms of tissue distribution, highly expressed in siliques, at intermediate levels in roots and flowers, and at lower levels in stems, rosette and cauline leaves.

The protein resides in the mitochondrion outer membrane. It catalyses the reaction a D-hexose + ATP = a D-hexose 6-phosphate + ADP + H(+). It carries out the reaction D-fructose + ATP = D-fructose 6-phosphate + ADP + H(+). The enzyme catalyses D-glucose + ATP = D-glucose 6-phosphate + ADP + H(+). It functions in the pathway carbohydrate metabolism; hexose metabolism. It participates in carbohydrate degradation; glycolysis; D-glyceraldehyde 3-phosphate and glycerone phosphate from D-glucose: step 1/4. Fructose and glucose phosphorylating enzyme. May be involved in the phosphorylation of glucose during the export from mitochondrion to cytosol. Acts as a sugar sensor which may regulate sugar-dependent gene repression or activation. Mediates the effects of sugar on plant growth and development independently of its catalytic activity or the sugar metabolism. May regulate the execution of program cell death in plant cells. The chain is Hexokinase-2 (HXK2) from Arabidopsis thaliana (Mouse-ear cress).